The chain runs to 191 residues: Recombination protein RecR (191 aa).

The C4-type zinc finger occupies 56 to 71; it reads CQNCNFLQSNNICHFC. In terms of domain architecture, Toprim spans 78–170; the sequence is KQLMIFETTS…KVTKLAQGLP (93 aa).

It belongs to the RecR family.

Functionally, may play a role in DNA repair. It seems to be involved in an RecBC-independent recombinational process of DNA repair. It may act with RecF and RecO. The protein is Recombination protein RecR of Mycoplasmopsis pulmonis (strain UAB CTIP) (Mycoplasma pulmonis).